Reading from the N-terminus, the 536-residue chain is REST corepressor 2 (536 aa).

Residues 1–44 form a disordered region; sequence MERSGSGVLSRSRAKTVTNGNSQHSEEESSDEEHPNDSMIRVGG. Over residues 24–36 the composition is skewed to basic and acidic residues; sequence HSEEESSDEEHPN. The region spanning 38–123 is the ELM2 domain; the sequence is SMIRVGGDYQ…KSLADLANFT (86 aa). Residues 124 to 175 enclose the SANT 1 domain; the sequence is PFPDEWTVEDKVLFEQAFSFHGKSFHRIQQMLPDKMITSLVKYYYSWKKTRT. The interval 179-264 is disordered; the sequence is VMDRQARKLL…RARRRPPKGM (86 aa). Positions 197-211 are enriched in acidic residues; it reads NDEIEEGDPGSDSDF. The span at 249–262 shows a compositional bias: basic residues; it reads YRHHPLRARRRPPK. Residues 283 to 315 adopt a coiled-coil conformation; sequence VTIRQLDTQLVSLKRQVQKIKQTNSVLRNNLGD. The region spanning 328 to 379 is the SANT 2 domain; the sequence is KINSRWTTEEQLLAVQAVRRYGKDFAAIADVIGNKTVAQVSSFFVSYRRRFN. Residues 389-536 form a disordered region; sequence AEQEVQGSSG…GLKVESPQSH (148 aa). Over residues 391–406 the composition is skewed to polar residues; sequence QEVQGSSGRTVNTELN. Positions 422 to 449 are enriched in low complexity; it reads SPPHSDSPLPSSEGSASGNHSSAQSSPP. Residues 450–476 are compositionally biased toward pro residues; sequence LTQPPPLLRPAPPSAPPSLLRQPPPLQ.

Belongs to the CoREST family.

It localises to the nucleus. Functionally, may act as a component of a corepressor complex that represses transcription. The sequence is that of REST corepressor 2 (rcor2) from Danio rerio (Zebrafish).